Reading from the N-terminus, the 391-residue chain is Probable sugar efflux transporter (391 aa).

12 helical membrane passes run 16-36, 51-71, 82-102, 103-123, 138-158, 171-191, 210-230, 247-267, 277-297, 300-320, 338-358, and 361-381; these read VFVF…PVAL, VGLM…PLML, LLFL…AWNF, WVLL…WSIT, QALG…LPLG, FGVI…LLPP, PLLM…FTTY, ITTL…FLFG, FIAF…VFKN, WVIF…TIAL, IFSG…SIVI, and LGLG…LFWL.

It belongs to the major facilitator superfamily. SotB (TC 2.A.1.2) family.

The protein resides in the cell inner membrane. Its function is as follows. Involved in the efflux of sugars. The physiological role may be the reduction of the intracellular concentration of toxic sugars or sugar metabolites. The sequence is that of Probable sugar efflux transporter from Helicobacter pylori (strain G27).